Reading from the N-terminus, the 535-residue chain is CTP synthase (535 aa).

An amidoligase domain region spans residues 1 to 267 (MTKYIFVTGG…DQIVCDHLKL (267 aa)). Residue Ser13 participates in CTP binding. A UTP-binding site is contributed by Ser13. 14–19 (SLGKGI) is a binding site for ATP. Tyr54 is an L-glutamine binding site. Residue Asp71 participates in ATP binding. Positions 71 and 141 each coordinate Mg(2+). CTP-binding positions include 148-150 (DIE), 188-193 (KTKPTQ), and Lys224. UTP-binding positions include 188–193 (KTKPTQ) and Lys224. 240–242 (RDA) is a binding site for ATP. A Glutamine amidotransferase type-1 domain is found at 292–534 (KIALVGKYVE…VKASITNKES (243 aa)). Gly354 contributes to the L-glutamine binding site. Cys381 (nucleophile; for glutamine hydrolysis) is an active-site residue. Residues 382–385 (LGMQ), Glu405, and Arg462 contribute to the L-glutamine site. Catalysis depends on residues His507 and Glu509.

The protein belongs to the CTP synthase family. In terms of assembly, homotetramer.

The catalysed reaction is UTP + L-glutamine + ATP + H2O = CTP + L-glutamate + ADP + phosphate + 2 H(+). It carries out the reaction L-glutamine + H2O = L-glutamate + NH4(+). It catalyses the reaction UTP + NH4(+) + ATP = CTP + ADP + phosphate + 2 H(+). It functions in the pathway pyrimidine metabolism; CTP biosynthesis via de novo pathway; CTP from UDP: step 2/2. Allosterically activated by GTP, when glutamine is the substrate; GTP has no effect on the reaction when ammonia is the substrate. The allosteric effector GTP functions by stabilizing the protein conformation that binds the tetrahedral intermediate(s) formed during glutamine hydrolysis. Inhibited by the product CTP, via allosteric rather than competitive inhibition. Catalyzes the ATP-dependent amination of UTP to CTP with either L-glutamine or ammonia as the source of nitrogen. Regulates intracellular CTP levels through interactions with the four ribonucleotide triphosphates. The polypeptide is CTP synthase (Bacillus thuringiensis subsp. konkukian (strain 97-27)).